The chain runs to 331 residues: D-alanine--D-alanine ligase (331 aa).

The region spanning 122-328 (KLWYDAIGIP…FHEFLADCIE (207 aa)) is the ATP-grasp domain. 152 to 207 (AFDKWGKLFVKAARQGSSVGCYSVTNIEQLSDAIDKAFGFSHQVLVEKAVKPRELE) provides a ligand contact to ATP. 3 residues coordinate Mg(2+): Asp282, Glu295, and Asn297.

Belongs to the D-alanine--D-alanine ligase family. The cofactor is Mg(2+). Mn(2+) is required as a cofactor.

Its subcellular location is the cytoplasm. It catalyses the reaction 2 D-alanine + ATP = D-alanyl-D-alanine + ADP + phosphate + H(+). It functions in the pathway cell wall biogenesis; peptidoglycan biosynthesis. In terms of biological role, cell wall formation. This chain is D-alanine--D-alanine ligase, found in Vibrio vulnificus (strain YJ016).